Here is a 425-residue protein sequence, read N- to C-terminus: Histidine--tRNA ligase (425 aa).

It belongs to the class-II aminoacyl-tRNA synthetase family. Homodimer.

The protein resides in the cytoplasm. It carries out the reaction tRNA(His) + L-histidine + ATP = L-histidyl-tRNA(His) + AMP + diphosphate + H(+). This chain is Histidine--tRNA ligase, found in Chlorobium chlorochromatii (strain CaD3).